Here is a 214-residue protein sequence, read N- to C-terminus: Calcineurin B homologous protein 3 (214 aa).

A lipid anchor (N-myristoyl glycine) is attached at glycine 2. In terms of domain architecture, EF-hand spans 110–145; that stretch reads FRKEKLKFLFHMYDADYDGIITLQEYKNVLDELMSG. Ca(2+)-binding residues include aspartate 123, aspartate 125, aspartate 127, and glutamate 134.

It belongs to the calcineurin regulatory subunit family. CHP subfamily. Monomer. Homodimer. In terms of tissue distribution, expressed in the bipotential gonad by E4.5 and expressed in both the testis and ovary by E5.5, but with expression higher in the testis. Expressed in the testis cords but also at low levels in the interstitium. In the ovary, expression is principally in the ovarian cortex, but also in the medulla. Also expressed in the embryonic brain, with expression highest in the region between the nasal placode and olfactory bulb. Also expressed in the embryonic heart and tail.

The protein resides in the nucleus. It is found in the cytoplasm. Its subcellular location is the membrane. It localises to the cell membrane. The protein localises to the cell projection. The protein resides in the lamellipodium. It is found in the ruffle membrane. Its function is as follows. Functions as an integral cofactor in cell pH regulation by controlling plasma membrane-type Na(+)/H(+) exchange activity. Promotes the induction of hematopoietic stem cell differentiation toward megakaryocytic lineage. Essential for the coupling of ERK cascade activation with the expression of ETS family genes in megakaryocytic differentiation. Also involved in granulocytic differentiation in a ERK-dependent manner. Inhibits the phosphatase activity of calcineurin. The sequence is that of Calcineurin B homologous protein 3 from Gallus gallus (Chicken).